Consider the following 367-residue polypeptide: MYVKNINLLNYRNYKKLSVELTENVNVFVGDNAQGKTNILESVYYCAFAKSHRTSKDKELINWENSTAYISLLIGKNRLDKKIDINILRDGKKAIKVNNIKVNKIGELFGIFNVVMFSPEDLKVIKEAPSLRRRLLDMELSQVNPNYYFNLVQYNKVLGERNILLKSRSFSEDILDVYDIQLSKYADYIISKRLEYINKINFYGDIIHREITSGKEEINFKYNCTVNLENGKFKDNYLKKLKDNIQKDREKGLTSVGPHRDDFSVFINNIDTKIFGSQGQQRTSILTMKFASLKIIREITGEYPVLLLDDVLSELDLNRKKYILRSIKDIQTIITCAGIEDLNDYLDDKVKIFNVSNGQILNQGRNI.

An ATP-binding site is contributed by 30 to 37 (GDNAQGKT).

Belongs to the RecF family.

Its subcellular location is the cytoplasm. Its function is as follows. The RecF protein is involved in DNA metabolism; it is required for DNA replication and normal SOS inducibility. RecF binds preferentially to single-stranded, linear DNA. It also seems to bind ATP. The chain is DNA replication and repair protein RecF from Clostridium beijerinckii (strain ATCC 51743 / NCIMB 8052) (Clostridium acetobutylicum).